The sequence spans 594 residues: Sodium-dependent glucose transporter 1 (594 aa).

Transmembrane regions (helical) follow at residues 77–97 (WLVSLALCASFLGLGMAISVL), 115–137 (LSYIFVGRASGYIGGSLLGGILF), 144–161 (LLLGFALLTTAFGMSGTP), 166–186 (AWVLTVLMSSVGVSMGVLDTG), 205–225 (ALHFSFAAGAFASPIIAKLLF), 269–289 (IVIGAFVLLVSLLFFSLYFCI), 311–331 (TLIILLSMFFFFYVGSEVAYG), 349–371 (AAGLNSLFWGAFAAGRGLAIFFA), 393–413 (LLCLFSQNYPMLWACTALYGI), 439–459 (IFVVGAALGEMVLPALLGFLL), and 467–487 (LLMYLTLCTATFTSILFPVLY).

Belongs to the major facilitator superfamily.

The protein localises to the apical cell membrane. May function as a sodium-dependent glucose transporter. Potential channels for urea in the inner medulla of kidney. This chain is Sodium-dependent glucose transporter 1 (mfsd4b), found in Danio rerio (Zebrafish).